Here is a 192-residue protein sequence, read N- to C-terminus: MKKLFLIIGAPGSGKTTDAELIAERNSDKIVHYSTGDLLRAEVASGSELGQTIKSYIDNGNLVPLEIVINTIKSAIEKAPKDIVLIDGFPRSVEQMKALDEMLKNTDDIELVSVIEVEVSEDVARERVLGRARGADDNVEVFNNRMKVFTEPLKDIQDFYSAQGKLIKINGERTIEEIVDEMEQVIKEKAGI.

Residue 12-17 (GSGKTT) participates in ATP binding. Residues 34–63 (STGDLLRAEVASGSELGQTIKSYIDNGNLV) are NMP. AMP is bound by residues Thr35, Arg40, 61 to 63 (NLV), 88 to 91 (GFPR), and Gln95. An LID region spans residues 130-136 (GRARGAD). Arg131 provides a ligand contact to ATP. Arg133 and Arg145 together coordinate AMP. Position 173 (Arg173) interacts with ATP.

Belongs to the adenylate kinase family. In terms of assembly, monomer.

It is found in the cytoplasm. The enzyme catalyses AMP + ATP = 2 ADP. Its pathway is purine metabolism; AMP biosynthesis via salvage pathway; AMP from ADP: step 1/1. Functionally, catalyzes the reversible transfer of the terminal phosphate group between ATP and AMP. Plays an important role in cellular energy homeostasis and in adenine nucleotide metabolism. This Nautilia profundicola (strain ATCC BAA-1463 / DSM 18972 / AmH) protein is Adenylate kinase.